Here is a 132-residue protein sequence, read N- to C-terminus: Small ribosomal subunit protein eS12 (132 aa).

It belongs to the eukaryotic ribosomal protein eS12 family.

This Oreochromis niloticus (Nile tilapia) protein is Small ribosomal subunit protein eS12 (rps12).